A 226-amino-acid chain; its full sequence is Ornithine decarboxylase antizyme (226 aa).

This sequence belongs to the ODC antizyme family. As to quaternary structure, interacts with ODC and thereby sterically blocks ODC homodimerization.

Ornithine decarboxylase (ODC) antizyme protein that negatively regulates ODC activity and intracellular polyamine biosynthesis in response to increased intracellular polyamine levels. Binds to ODC monomers, inhibiting the assembly of the functional ODC homodimer, and targets the monomers for ubiquitin-independent proteolytic destruction by the 26S proteasome. The sequence is that of Ornithine decarboxylase antizyme (spa1) from Schizosaccharomyces pombe (strain 972 / ATCC 24843) (Fission yeast).